Here is a 318-residue protein sequence, read N- to C-terminus: Probable aminopeptidase YbaC (318 aa).

The Nucleophile role is filled by Ser-115. Residue Asp-266 is part of the active site. Catalysis depends on His-296, which acts as the Proton donor.

It belongs to the peptidase S33 family.

Probable aminopeptidase. The sequence is that of Probable aminopeptidase YbaC (ybaC) from Bacillus subtilis (strain 168).